The primary structure comprises 317 residues: Aspartate carbamoyltransferase catalytic subunit (317 aa).

2 residues coordinate carbamoyl phosphate: Arg66 and Thr67. Residue Lys94 participates in L-aspartate binding. Residues Arg116, His144, and Gln147 each coordinate carbamoyl phosphate. L-aspartate is bound by residues Arg177 and Arg231. 2 residues coordinate carbamoyl phosphate: Gly272 and Pro273.

Belongs to the aspartate/ornithine carbamoyltransferase superfamily. ATCase family. In terms of assembly, heterododecamer (2C3:3R2) of six catalytic PyrB chains organized as two trimers (C3), and six regulatory PyrI chains organized as three dimers (R2).

It catalyses the reaction carbamoyl phosphate + L-aspartate = N-carbamoyl-L-aspartate + phosphate + H(+). The protein operates within pyrimidine metabolism; UMP biosynthesis via de novo pathway; (S)-dihydroorotate from bicarbonate: step 2/3. Its function is as follows. Catalyzes the condensation of carbamoyl phosphate and aspartate to form carbamoyl aspartate and inorganic phosphate, the committed step in the de novo pyrimidine nucleotide biosynthesis pathway. This Rhodopseudomonas palustris (strain HaA2) protein is Aspartate carbamoyltransferase catalytic subunit.